A 117-amino-acid chain; its full sequence is Fluoride-specific ion channel FluC 2 (117 aa).

The next 2 membrane-spanning stretches (helical) occupy residues 1–21 and 46–66; these read MISIILVMIGGGFGAIARSAI and FLIGLTIGLSISISWFPAFFV. Na(+)-binding residues include glycine 71 and threonine 74. A helical transmembrane segment spans residues 95–115; the sequence is LFLNYSLLQFIIGFIACYIGY.

The protein belongs to the fluoride channel Fluc/FEX (TC 1.A.43) family.

It localises to the cell membrane. The catalysed reaction is fluoride(in) = fluoride(out). Its activity is regulated as follows. Na(+) is not transported, but it plays an essential structural role and its presence is essential for fluoride channel function. Fluoride-specific ion channel. Important for reducing fluoride concentration in the cell, thus reducing its toxicity. The chain is Fluoride-specific ion channel FluC 2 from Staphylococcus aureus (strain NCTC 8325 / PS 47).